The primary structure comprises 479 residues: F-box protein At5g51380 (479 aa).

The tract at residues 1 to 20 is disordered; that stretch reads MTFREKMPTSPKSPLRRRRS. The F-box domain occupies 62 to 108; sequence DRTLSLSDSLLLKILEKLPESQNEDVSLVCKRWLSVQGRRLRSMKVF.

This Arabidopsis thaliana (Mouse-ear cress) protein is F-box protein At5g51380.